The sequence spans 325 residues: GMP reductase (325 aa).

Cys173 serves as the catalytic Thioimidate intermediate. 202-225 (IIADGGIRSHGDIAKSIRFGATMV) contributes to the NADP(+) binding site.

The protein belongs to the IMPDH/GMPR family. GuaC type 2 subfamily.

It carries out the reaction IMP + NH4(+) + NADP(+) = GMP + NADPH + 2 H(+). Functionally, catalyzes the irreversible NADPH-dependent deamination of GMP to IMP. It functions in the conversion of nucleobase, nucleoside and nucleotide derivatives of G to A nucleotides, and in maintaining the intracellular balance of A and G nucleotides. The protein is GMP reductase of Paracidovorax citrulli (strain AAC00-1) (Acidovorax citrulli).